The primary structure comprises 295 residues: Xyloglucan endotransglucosylase protein 2 (295 aa).

An N-terminal signal peptide occupies residues 1–23 (MAMGTHFGGLWLALLCMVSATMG). One can recognise a GH16 domain in the interval 24 to 222 (AVPRKPVDVP…WSKAPFVASY (199 aa)). Residue Glu108 is the Nucleophile of the active site. Residue Glu112 is the Proton donor of the active site. Glu112 provides a ligand contact to xyloglucan. N-linked (GlcNAc...) asparagine glycosylation occurs at Asn116. Residues 125–127 (QTN), 135–137 (DRE), 201–202 (DW), and Gly206 each bind xyloglucan. 2 cysteine pairs are disulfide-bonded: Cys230–Cys239 and Cys276–Cys289. Arg281 is a xyloglucan binding site.

This sequence belongs to the glycosyl hydrolase 16 family. XTH group 1 subfamily. In terms of processing, contains at least one intrachain disulfide bond essential for its enzymatic activity. Expressed in fruit pulp.

The protein localises to the secreted. It localises to the cell wall. The protein resides in the extracellular space. It is found in the apoplast. The enzyme catalyses breaks a beta-(1-&gt;4) bond in the backbone of a xyloglucan and transfers the xyloglucanyl segment on to O-4 of the non-reducing terminal glucose residue of an acceptor, which can be a xyloglucan or an oligosaccharide of xyloglucan.. Catalyzes xyloglucan endotransglycosylation (XET). Cleaves and religates xyloglucan polymers. Does not catalyze xyloglucan endohydrolysis (XEH). Probably involved in cell wall restructuring during fruit ripening and postharvest fruit softening. The protein is Xyloglucan endotransglucosylase protein 2 of Diospyros kaki (Kaki persimmon).